We begin with the raw amino-acid sequence, 195 residues long: MTINTNNLTITISAASKKQYPENDWPEIALAGRSNVGKSSFINTLLNRKNFARTSGQPGKTQLLNFYNIDDQLHFVDVPGYGYARVSKKEREKWGKMIEEYLTTRENLKAVVSLVDIRHEPSEDDLMMYEFLKYYHIPVILVATKADKVPRGKWNKHESIIKKAMKFDSTDDFIIFSSTDKTGIEEAWTAILKYL.

The EngB-type G domain maps to 24-195 (DWPEIALAGR…EAWTAILKYL (172 aa)). Residues 32-39 (GRSNVGKS), 59-63 (GKTQL), 77-80 (DVPG), 144-147 (TKAD), and 176-178 (FSS) contribute to the GTP site. 2 residues coordinate Mg(2+): serine 39 and threonine 61.

The protein belongs to the TRAFAC class TrmE-Era-EngA-EngB-Septin-like GTPase superfamily. EngB GTPase family. Mg(2+) serves as cofactor.

Necessary for normal cell division and for the maintenance of normal septation. The chain is Probable GTP-binding protein EngB from Lactococcus lactis subsp. cremoris (strain MG1363).